The primary structure comprises 156 residues: Putative HTH-type transcriptional regulator YwgB (156 aa).

One can recognise an HTH rrf2-type domain in the interval 2–133 (KMKSGMEQAV…REESLQHVMD (132 aa)).

This is Putative HTH-type transcriptional regulator YwgB (ywgB) from Bacillus subtilis (strain 168).